Consider the following 376-residue polypeptide: Gibberellin 20 oxidase 4 (376 aa).

The region spanning 222–322 is the Fe2OG dioxygenase domain; the sequence is DNESIFRLNY…RKTLAFFLCP (101 aa). The Fe cation site is built by His-247, Asp-249, and His-303. Arg-313 is an active-site residue.

Belongs to the iron/ascorbate-dependent oxidoreductase family. GA20OX subfamily. The cofactor is Fe(2+). Requires L-ascorbate as cofactor. In terms of tissue distribution, expressed in roots. Detected in leaves, inflorescences and siliques, but not in stems and dry seeds.

The enzyme catalyses gibberellin A12 + 2 2-oxoglutarate + 3 O2 + H(+) = gibberellin A9 + 2 succinate + 3 CO2 + 2 H2O. It catalyses the reaction gibberellin A53 + 2 2-oxoglutarate + 3 O2 + H(+) = gibberellin A20 + 2 succinate + 3 CO2 + 2 H2O. It participates in plant hormone biosynthesis; gibberellin biosynthesis. Key oxidase enzyme in the biosynthesis of gibberellin that catalyzes the conversion of GA12 and GA53 to GA9 and GA20 respectively, via a three-step oxidation at C-20 of the GA skeleton. The polypeptide is Gibberellin 20 oxidase 4 (GA20OX4) (Arabidopsis thaliana (Mouse-ear cress)).